The primary structure comprises 394 residues: Elongation factor Tu-A (394 aa).

Residues 10 to 204 (KPHVNVGTIG…HLDTYIPEPQ (195 aa)) form the tr-type G domain. Residues 19–26 (GHVDHGKT) are G1. 19–26 (GHVDHGKT) serves as a coordination point for GTP. A Mg(2+)-binding site is contributed by Thr-26. The G2 stretch occupies residues 60–64 (GITIN). The segment at 81-84 (DCPG) is G3. GTP is bound by residues 81–85 (DCPGH) and 136–139 (NKCD). Positions 136–139 (NKCD) are G4. Positions 174–176 (SAL) are G5.

This sequence belongs to the TRAFAC class translation factor GTPase superfamily. Classic translation factor GTPase family. EF-Tu/EF-1A subfamily. As to quaternary structure, monomer.

Its subcellular location is the cytoplasm. It carries out the reaction GTP + H2O = GDP + phosphate + H(+). Its function is as follows. GTP hydrolase that promotes the GTP-dependent binding of aminoacyl-tRNA to the A-site of ribosomes during protein biosynthesis. The protein is Elongation factor Tu-A of Pasteurella multocida (strain Pm70).